Reading from the N-terminus, the 441-residue chain is Ribosomal protein uS12 methylthiotransferase RimO (441 aa).

One can recognise an MTTase N-terminal domain in the interval 8–118; it reads PKIGFVSLGC…VLQHVHHYVP (111 aa). [4Fe-4S] cluster is bound by residues Cys-17, Cys-53, Cys-82, Cys-150, Cys-154, and Cys-157. In terms of domain architecture, Radical SAM core spans 136–373; it reads LTPRHYAYLK…MQLQQQISAE (238 aa). The TRAM domain maps to 376 to 441; it reads QEKVGREILV…DEYDLWGSRV (66 aa).

It belongs to the methylthiotransferase family. RimO subfamily. [4Fe-4S] cluster serves as cofactor.

It localises to the cytoplasm. The enzyme catalyses L-aspartate(89)-[ribosomal protein uS12]-hydrogen + (sulfur carrier)-SH + AH2 + 2 S-adenosyl-L-methionine = 3-methylsulfanyl-L-aspartate(89)-[ribosomal protein uS12]-hydrogen + (sulfur carrier)-H + 5'-deoxyadenosine + L-methionine + A + S-adenosyl-L-homocysteine + 2 H(+). Functionally, catalyzes the methylthiolation of an aspartic acid residue of ribosomal protein uS12. In Salmonella typhi, this protein is Ribosomal protein uS12 methylthiotransferase RimO.